Here is a 957-residue protein sequence, read N- to C-terminus: UvrABC system protein A (957 aa).

33-40 (GLSGSGKS) is an ATP binding site. Residues 252–279 (CPQCGFSIPELEPRMFSFNSPFGACPTC) form a C4-type zinc finger. ABC transporter domains are found at residues 309–587 (WEPI…AKSL) and 607–935 (PNGR…KYLR). 639–646 (GVSGSGKS) is a binding site for ATP. The C4-type zinc-finger motif lies at 738-764 (CEACRGDGIIKIEMHFLPDVYVPCEVC).

It belongs to the ABC transporter superfamily. UvrA family. Forms a heterotetramer with UvrB during the search for lesions.

The protein localises to the cytoplasm. Its function is as follows. The UvrABC repair system catalyzes the recognition and processing of DNA lesions. UvrA is an ATPase and a DNA-binding protein. A damage recognition complex composed of 2 UvrA and 2 UvrB subunits scans DNA for abnormalities. When the presence of a lesion has been verified by UvrB, the UvrA molecules dissociate. The protein is UvrABC system protein A of Halalkalibacterium halodurans (strain ATCC BAA-125 / DSM 18197 / FERM 7344 / JCM 9153 / C-125) (Bacillus halodurans).